Consider the following 268-residue polypeptide: 4-hydroxy-tetrahydrodipicolinate reductase (268 aa).

Residues 10–15, aspartate 36, 99–101, and 123–126 each bind NAD(+); these read GASGRM, GTT, and APNM. Histidine 156 serves as the catalytic Proton donor/acceptor. Histidine 157 contributes to the (S)-2,3,4,5-tetrahydrodipicolinate binding site. Lysine 160 serves as the catalytic Proton donor. A (S)-2,3,4,5-tetrahydrodipicolinate-binding site is contributed by 166 to 167; the sequence is GT.

It belongs to the DapB family.

It is found in the cytoplasm. The catalysed reaction is (S)-2,3,4,5-tetrahydrodipicolinate + NAD(+) + H2O = (2S,4S)-4-hydroxy-2,3,4,5-tetrahydrodipicolinate + NADH + H(+). The enzyme catalyses (S)-2,3,4,5-tetrahydrodipicolinate + NADP(+) + H2O = (2S,4S)-4-hydroxy-2,3,4,5-tetrahydrodipicolinate + NADPH + H(+). The protein operates within amino-acid biosynthesis; L-lysine biosynthesis via DAP pathway; (S)-tetrahydrodipicolinate from L-aspartate: step 4/4. Its function is as follows. Catalyzes the conversion of 4-hydroxy-tetrahydrodipicolinate (HTPA) to tetrahydrodipicolinate. The chain is 4-hydroxy-tetrahydrodipicolinate reductase from Herminiimonas arsenicoxydans.